We begin with the raw amino-acid sequence, 907 residues long: Aldehyde oxidoreductase (907 aa).

In terms of domain architecture, 2Fe-2S ferredoxin-type spans 2 to 79 (IQKVITVNGI…GAQITTIEGV (78 aa)). [2Fe-2S] cluster-binding residues include Cys40, Cys45, Cys48, Cys60, Cys100, Cys103, Cys137, and Cys139. Mo-molybdopterin cytosine dinucleotide is bound by residues His653 and Glu869.

This sequence belongs to the xanthine dehydrogenase family. As to quaternary structure, homodimer. Requires Mo-molybdopterin cytosine dinucleotide as cofactor. The cofactor is [2Fe-2S] cluster.

The catalysed reaction is an aldehyde + A + H2O = a carboxylate + AH2 + H(+). In Megalodesulfovibrio gigas (Desulfovibrio gigas), this protein is Aldehyde oxidoreductase (mop).